A 130-amino-acid chain; its full sequence is Large ribosomal subunit protein bL17 (130 aa).

It belongs to the bacterial ribosomal protein bL17 family. Part of the 50S ribosomal subunit. Contacts protein L32.

The protein is Large ribosomal subunit protein bL17 of Nitrosomonas europaea (strain ATCC 19718 / CIP 103999 / KCTC 2705 / NBRC 14298).